The primary structure comprises 405 residues: Molybdopterin molybdenumtransferase 2 (405 aa).

The protein belongs to the MoeA family. Mg(2+) serves as cofactor.

It catalyses the reaction adenylyl-molybdopterin + molybdate = Mo-molybdopterin + AMP + H(+). It functions in the pathway cofactor biosynthesis; molybdopterin biosynthesis. In terms of biological role, catalyzes the insertion of molybdate into adenylated molybdopterin with the concomitant release of AMP. The polypeptide is Molybdopterin molybdenumtransferase 2 (moaE2) (Mycobacterium tuberculosis (strain CDC 1551 / Oshkosh)).